We begin with the raw amino-acid sequence, 305 residues long: GMP synthase [glutamine-hydrolyzing] subunit B (305 aa).

Positions 2 to 184 (VKTEKFIQKS…LGLPPEIQHR (183 aa)) constitute a GMPS ATP-PPase domain. An ATP-binding site is contributed by 29–35 (SGGVDSS).

Heterodimer composed of a glutamine amidotransferase subunit (A) and a GMP-binding subunit (B).

It carries out the reaction XMP + L-glutamine + ATP + H2O = GMP + L-glutamate + AMP + diphosphate + 2 H(+). Its pathway is purine metabolism; GMP biosynthesis; GMP from XMP (L-Gln route): step 1/1. Functionally, catalyzes the synthesis of GMP from XMP. The chain is GMP synthase [glutamine-hydrolyzing] subunit B from Methanoregula boonei (strain DSM 21154 / JCM 14090 / 6A8).